Here is a 185-residue protein sequence, read N- to C-terminus: Large ribosomal subunit protein bL25 (185 aa).

The protein belongs to the bacterial ribosomal protein bL25 family. CTC subfamily. Part of the 50S ribosomal subunit; part of the 5S rRNA/L5/L18/L25 subcomplex. Contacts the 5S rRNA. Binds to the 5S rRNA independently of L5 and L18.

Functionally, this is one of the proteins that binds to the 5S RNA in the ribosome where it forms part of the central protuberance. This Chlamydia trachomatis serovar L2 (strain ATCC VR-902B / DSM 19102 / 434/Bu) protein is Large ribosomal subunit protein bL25.